A 148-amino-acid chain; its full sequence is HTH-type transcriptional regulator BilQ (148 aa).

The HTH marR-type domain occupies 1-140 (MDFKNLQYES…LVKNLHVVKD (140 aa)). Residues 54-77 (LNDVSTEFEVDKAHTTRTISRLEQ) constitute a DNA-binding region (H-T-H motif).

Functionally, transcription regulator that regulates expression of the bilirubin reductase operon (bilQ, bilR and bilS). In Clostridioides difficile (strain CD3), this protein is HTH-type transcriptional regulator BilQ.